The sequence spans 222 residues: Pyridoxine/pyridoxamine 5'-phosphate oxidase (222 aa).

FMN contacts are provided by residues 69 to 74, 84 to 85, Lys-91, and Gln-113; these read RMVLLK and YT. Lys-74 provides a ligand contact to substrate. 3 residues coordinate substrate: Tyr-131, Arg-135, and Ser-139. FMN-binding positions include 148 to 149 and Trp-193; that span reads QS. Position 199-201 (199-201) interacts with substrate; it reads RLH. An FMN-binding site is contributed by Arg-203.

This sequence belongs to the pyridoxamine 5'-phosphate oxidase family. In terms of assembly, homodimer. FMN is required as a cofactor.

The enzyme catalyses pyridoxamine 5'-phosphate + O2 + H2O = pyridoxal 5'-phosphate + H2O2 + NH4(+). The catalysed reaction is pyridoxine 5'-phosphate + O2 = pyridoxal 5'-phosphate + H2O2. Its pathway is cofactor metabolism; pyridoxal 5'-phosphate salvage; pyridoxal 5'-phosphate from pyridoxamine 5'-phosphate: step 1/1. It participates in cofactor metabolism; pyridoxal 5'-phosphate salvage; pyridoxal 5'-phosphate from pyridoxine 5'-phosphate: step 1/1. In terms of biological role, catalyzes the oxidation of either pyridoxine 5'-phosphate (PNP) or pyridoxamine 5'-phosphate (PMP) into pyridoxal 5'-phosphate (PLP). The polypeptide is Pyridoxine/pyridoxamine 5'-phosphate oxidase (Maricaulis maris (strain MCS10) (Caulobacter maris)).